The primary structure comprises 29 residues: Small ribosomal subunit protein uS7 (29 aa).

The disordered stretch occupies residues 1–29; that stretch reads ELIGAANRDTKSFSINRKDAKERVAKAAR. A compositionally biased stretch (basic and acidic residues) spans 8–29; sequence RDTKSFSINRKDAKERVAKAAR.

This sequence belongs to the universal ribosomal protein uS7 family. As to quaternary structure, part of the 30S ribosomal subunit.

In terms of biological role, one of the primary rRNA binding proteins, it binds directly to 16S rRNA where it nucleates assembly of the head domain of the 30S subunit. Is located at the subunit interface close to the decoding center. This Methanosarcina thermophila protein is Small ribosomal subunit protein uS7 (rps7).